A 140-amino-acid polypeptide reads, in one-letter code: Transcription antitermination protein NusB (140 aa).

This sequence belongs to the NusB family.

Involved in transcription antitermination. Required for transcription of ribosomal RNA (rRNA) genes. Binds specifically to the boxA antiterminator sequence of the ribosomal RNA (rrn) operons. The chain is Transcription antitermination protein NusB from Sorangium cellulosum (strain So ce56) (Polyangium cellulosum (strain So ce56)).